We begin with the raw amino-acid sequence, 161 residues long: Tropomyosin-2 (161 aa).

Residues methionine 1–leucine 161 adopt a coiled-coil conformation. The span at leucine 32–isoleucine 43 shows a compositional bias: basic and acidic residues. Residues leucine 32 to aspartate 97 form a disordered region. Residue serine 55 is modified to Phosphoserine. Residues serine 62 to asparagine 83 are compositionally biased toward polar residues. Phosphoserine occurs at positions 116 and 157.

Homodimer.

It localises to the cytoplasm. The protein resides in the cytoskeleton. Its function is as follows. Involved in cell morphogenesis. Binds to F-actin and stabilizes the actin filaments. This Saccharomyces cerevisiae (strain ATCC 204508 / S288c) (Baker's yeast) protein is Tropomyosin-2 (TPM2).